Consider the following 138-residue polypeptide: Small ribosomal subunit protein uS11c (138 aa).

Positions 1-22 (MAKLLPRIGSRKNGRISSRKNA) are disordered. The segment covering 9-22 (GSRKNGRISSRKNA) has biased composition (basic residues).

The protein belongs to the universal ribosomal protein uS11 family. In terms of assembly, part of the 30S ribosomal subunit.

The protein resides in the plastid. It localises to the chloroplast. The protein is Small ribosomal subunit protein uS11c of Populus alba (White poplar).